The sequence spans 262 residues: Orotidine 5'-phosphate decarboxylase (262 aa).

Residues aspartate 35, 57-59 (KTH), 89-98 (DRKFADIGNT), tyrosine 215, and arginine 233 each bind substrate. Lysine 91 (proton donor) is an active-site residue.

Belongs to the OMP decarboxylase family.

The catalysed reaction is orotidine 5'-phosphate + H(+) = UMP + CO2. The protein operates within pyrimidine metabolism; UMP biosynthesis via de novo pathway; UMP from orotate: step 2/2. The sequence is that of Orotidine 5'-phosphate decarboxylase (URA3) from Pichia kudriavzevii (Yeast).